A 478-amino-acid chain; its full sequence is Glycogen synthase (478 aa).

K15 provides a ligand contact to ADP-alpha-D-glucose.

It belongs to the glycosyltransferase 1 family. Bacterial/plant glycogen synthase subfamily.

The catalysed reaction is [(1-&gt;4)-alpha-D-glucosyl](n) + ADP-alpha-D-glucose = [(1-&gt;4)-alpha-D-glucosyl](n+1) + ADP + H(+). It functions in the pathway glycan biosynthesis; glycogen biosynthesis. Its function is as follows. Synthesizes alpha-1,4-glucan chains using ADP-glucose. The polypeptide is Glycogen synthase (Caldicellulosiruptor bescii (strain ATCC BAA-1888 / DSM 6725 / KCTC 15123 / Z-1320) (Anaerocellum thermophilum)).